The primary structure comprises 115 residues: Skin calcitonin gene-related peptide (115 aa).

Residues 1–25 (MVLLKISSLLAVLGLLVCQMYSSQA) form the signal peptide. Positions 26–69 (APARRALEPLPDRVTEAHRLLRALIRELTAEDMEASSSGAAHKR) are cleaved as a propeptide — removed in mature form by a carboxypeptidase. The cysteines at positions 71 and 76 are disulfide-linked. A Phenylalanine amide modification is found at Phe-106. The propeptide at 107–115 (GRRRRSLHV) is removed in mature form by an endoprotease.

Skin, intestine and brain.

The protein resides in the secreted. Its function is as follows. CGRP induces vasodilation. It dilates a variety of vessels including the coronary, cerebral and systemic vasculature. Its abundance in the CNS also points toward a neurotransmitter or neuromodulator role. The chain is Skin calcitonin gene-related peptide from Phyllomedusa bicolor (Two-colored leaf frog).